The following is a 30-amino-acid chain: Cliotide T20 (30 aa).

The cyclopeptide (Gly-Asn) cross-link spans 1-30 (GSAIRCGESCLLGKCYTPGCTCDRPICKKN). Intrachain disulfides connect cysteine 6–cysteine 20, cysteine 10–cysteine 22, and cysteine 15–cysteine 27.

In terms of processing, contains 3 disulfide bonds. Post-translationally, this is a cyclic peptide. In terms of tissue distribution, expressed in root nodules but not in seed.

In terms of biological role, probably participates in a plant defense mechanism. Active against Gram-negative bacterium E.coli ATCC 700926 (MIC=0.5 uM) under low-salt conditions. Not active against Gram-positive bacterium S.aureus ATCC 12600 up to a concentration of 100 uM under low-salt conditions. Exhibits immunomodulatory activity but no cytotoxicity in vitro. The sequence is that of Cliotide T20 from Clitoria ternatea (Butterfly pea).